Here is a 127-residue protein sequence, read N- to C-terminus: 3-aminoacrylate deaminase RutC (127 aa).

It belongs to the RutC family.

It catalyses the reaction (Z)-3-aminoacrylate + H2O + H(+) = 3-oxopropanoate + NH4(+). In terms of biological role, involved in pyrimidine catabolism. Catalyzes the deamination of 3-aminoacrylate to malonic semialdehyde, a reaction that can also occur spontaneously. RutC may facilitate the reaction and modulate the metabolic fitness, rather than catalyzing essential functions. This chain is 3-aminoacrylate deaminase RutC, found in Pseudomonas savastanoi pv. phaseolicola (strain 1448A / Race 6) (Pseudomonas syringae pv. phaseolicola (strain 1448A / Race 6)).